A 1192-amino-acid polypeptide reads, in one-letter code: Leucine-rich repeat receptor protein kinase EMS1 (1192 aa).

Positions 1–18 (MAFLTALFLFLFFSFSSS) are cleaved as a signal peptide. Asn-47 is a glycosylation site (N-linked (GlcNAc...) asparagine). LRR repeat units follow at residues 64–87 (LGRVNSLSLPSLSLRGQIPKEISS), 90–112 (NLRELCLAGNQFSGKIPPEIWNL), 114–137 (HLQTLDLSGNSLTGLLPRLLSELP), 138–160 (QLLYLDLSDNHFSGSLPPSFFIS), 163–185 (ALSSLDVSNNSLSGEIPPEIGKL), 187–209 (NLSNLYMGLNSFSGQIPSEIGNI), 235–257 (HLAKLDLSYNPLKCSIPKSFGEL), 259–281 (NLSILNLVSAELIGLIPPELGNC), 283–304 (SLKSLMLSFNSLSGPLPLELSE), 330–352 (VLDSLLLANNRFSGEIPHEIEDC), 354–376 (MLKHLSLASNLLSGSIPRELCGS), 378–400 (SLEAIDLSGNLLSGTIEEVFDGC), 402–425 (SLGELLLTNNQINGSIPEDLWKLP), 426–447 (LMALDLDSNNFTGEIPKSLWKS), 449–471 (NLMEFTASYNRLEGYLPAEIGNA), 473–496 (SLKRLVLSDNQLTGEIPREIGKLT), 497–520 (SLSVLNLNANMFQGKIPVELGDCT), 521–543 (SLTTLDLGSNNLQGQIPDKITAL), 545–567 (QLQCLVLSYNNLSGSIPSKPSAY), 581–603 (HHGIFDLSYNRLSGPIPEELGEC), 605–628 (VLVEISLSNNHLSGEIPASLSRLT), 629–651 (NLTILDLSGNALTGSIPKEMGNS), 653–675 (KLQGLNLANNQLNGHIPESFGLL), 677–697 (SLVKLNLTKNKLDGPVPASLG), 701–723 (ELTHMDLSFNNLSGELSSELSTM), 725–748 (KLVGLYIEQNKFTGEIPSELGNLT), 749–772 (QLEYLDVSENLLSGEIPTKICGLP), and 773–795 (NLEFLNLAKNNLRGEVPSDGVCQ). Asn-171, Asn-187, and Asn-208 each carry an N-linked (GlcNAc...) asparagine glycan. Asn-259 carries an N-linked (GlcNAc...) asparagine glycan. 2 N-linked (GlcNAc...) asparagine glycosylation sites follow: Asn-414 and Asn-435. Residue Asn-555 is glycosylated (N-linked (GlcNAc...) asparagine). Residue Asn-629 is glycosylated (N-linked (GlcNAc...) asparagine). Asn-682, Asn-711, and Asn-746 each carry an N-linked (GlcNAc...) asparagine glycan. Residues 828–848 (WGIAGLMLGFTIIVFVFVFSL) form a helical membrane-spanning segment. Thr-914 bears the Phosphothreonine mark. The 276-residue stretch at 917 to 1192 (FSKKNIIGDG…LDVLKALKEI (276 aa)) folds into the Protein kinase domain. Residues 923-931 (IGDGGFGTV) and Lys-945 contribute to the ATP site. A Phosphotyrosine modification is found at Tyr-990. The active-site Proton acceptor is Asp-1043. The residue at position 1085 (Tyr-1085) is a Phosphotyrosine.

It belongs to the protein kinase superfamily. Ser/Thr protein kinase family. As to quaternary structure, interacts with TPD1. Post-translationally, autophosphorylates in vitro. Present in young buds, open flowers and siliques but absent from mature leaves and roots. Strongly expressed in the young organ primordia, and as the anthers and ovules developed, became focused in the microsporangia and in the distal and chalazal regions of the ovule. In cv. Landsberg erecta, only expressed in the anthers of young floral buds.

The protein localises to the cell membrane. The catalysed reaction is L-seryl-[protein] + ATP = O-phospho-L-seryl-[protein] + ADP + H(+). It carries out the reaction L-threonyl-[protein] + ATP = O-phospho-L-threonyl-[protein] + ADP + H(+). In terms of biological role, receptor with a serine/threonine-protein kinase activity required for the specification of the correct number of male archesporial initials and for the subsequent specification of tapetal and middle cell layer identities. In seeds, required for enhancing cell size and the rate of embryonic development. The polypeptide is Leucine-rich repeat receptor protein kinase EMS1 (Arabidopsis thaliana (Mouse-ear cress)).